Here is a 718-residue protein sequence, read N- to C-terminus: MKIRISLNILAKFLDSFAHLLFLKNKEIYTPRKEQAACVEVLERYFQANPENGRFLMNCKMRFGKCFTLYSYAQKNNINKILILTFVPAVEESLKDDLNHIEKNYKFYTDDDLQKSNFDLKNQNEPYVVFLSLQNVLGKQRIDGAKTDFDKERISKLQEIDFDLIVFDEYHYGANKKRTQIKVEKVNKKIDNPEQQDNQDDAEEELASTFKLKDIKSKFQFSYKQLVCLSGTPFSSLRNNEFSSKDQVFTYSYFDEQKAKSAENHPLKLGQYGIFPEMNIYCFELAEIFTAQEQEIFITPGKGKNKLPEISFRKLFQTENVSKESSKPVYRFVNENLVEKLIDSLIDKRKGFSHTPLSWENIDKHKHSLLILPTRVACFALANLLKNHWYFENNDFQIINMSESQFGNGKKALIELNKHLDEAKKTNKNTLTITVAKLTIGITVKEWSTVFFLKDLKGAESYFQTIFRIQTPYIKNCKNLKEICYVYDFNMYRCLEVTNEYSKQTQTDPKFSASWFQNLDKFLPIYLVRGDEIQKTDPEILQKYEYFIMDKRAFSTRWMDESNIIDIDVLCNVGQDEDAQKILKKILAHKKFKSSKKKREFEDVHLEKSPKSEAFSEGVRSGKDYAAEQGNVLEELENFWNFNQALEQKAKAEFQQKNFDDNEWNNYKKGFNFGVNKHFEDKVSIKKIVQNKIKDFKKRKGRTTSTFKKWKWLYFWWE.

Its function is as follows. Corresponds to the C-terminus of a putative G subtype type II restriction/methylase subunit. The polypeptide is Putative type II restriction enzyme and methyltransferase RM.MpnORF110P C-terminus (Mycoplasma pneumoniae (strain ATCC 29342 / M129 / Subtype 1) (Mycoplasmoides pneumoniae)).